Here is a 188-residue protein sequence, read N- to C-terminus: RWD domain-containing protein 4 (188 aa).

The residue at position 2 (Ser-2) is an N-acetylserine. An RWD domain is found at 9 to 111 (MELEALRSIY…EYAKDNKEQF (103 aa)). Residues 132 to 167 (TPNTAPSSKKKDKKEQLSKAQKRKLADKTDHKGELP) are disordered. Positions 155-166 (KLADKTDHKGEL) are enriched in basic and acidic residues.

This Homo sapiens (Human) protein is RWD domain-containing protein 4 (RWDD4).